The following is a 466-amino-acid chain: Arginine biosynthesis bifunctional protein ArgJ, mitochondrial (466 aa).

Positions 194, 223, 234, 321, 461, and 466 each coordinate substrate. Residue Thr234 is the Nucleophile of the active site.

Belongs to the ArgJ family. Heterodimer of an alpha and a beta chain. Post-translationally, the alpha and beta chains are autoproteolytically processed from a single precursor protein within the mitochondrion.

It is found in the mitochondrion matrix. The enzyme catalyses N(2)-acetyl-L-ornithine + L-glutamate = N-acetyl-L-glutamate + L-ornithine. The catalysed reaction is L-glutamate + acetyl-CoA = N-acetyl-L-glutamate + CoA + H(+). Its pathway is amino-acid biosynthesis; L-arginine biosynthesis; L-ornithine and N-acetyl-L-glutamate from L-glutamate and N(2)-acetyl-L-ornithine (cyclic): step 1/1. It functions in the pathway amino-acid biosynthesis; L-arginine biosynthesis; N(2)-acetyl-L-ornithine from L-glutamate: step 1/4. In terms of biological role, catalyzes two activities which are involved in the cyclic version of arginine biosynthesis: the synthesis of acetylglutamate from glutamate and acetyl-CoA, and of ornithine by transacetylation between acetylornithine and glutamate. The chain is Arginine biosynthesis bifunctional protein ArgJ, mitochondrial from Aspergillus fumigatus (strain ATCC MYA-4609 / CBS 101355 / FGSC A1100 / Af293) (Neosartorya fumigata).